Here is a 419-residue protein sequence, read N- to C-terminus: Probable serine/threonine-protein kinase DDB_G0290859 (419 aa).

One can recognise a Protein kinase domain in the interval tyrosine 40–phenylalanine 387. Residues isoleucine 46–valine 54 and lysine 69 contribute to the ATP site. Aspartate 173 (proton acceptor) is an active-site residue. The 32-residue stretch at glutamate 388 to asparagine 419 folds into the AGC-kinase C-terminal domain.

It belongs to the protein kinase superfamily. AGC Ser/Thr protein kinase family.

The catalysed reaction is L-seryl-[protein] + ATP = O-phospho-L-seryl-[protein] + ADP + H(+). It catalyses the reaction L-threonyl-[protein] + ATP = O-phospho-L-threonyl-[protein] + ADP + H(+). The chain is Probable serine/threonine-protein kinase DDB_G0290859 from Dictyostelium discoideum (Social amoeba).